The following is a 74-amino-acid chain: U-actitoxin-Bgr3a (74 aa).

The signal sequence occupies residues 1–21; the sequence is MSAQRFLFLLVVTSLIAASLA. A propeptide spanning residues 22–29 is cleaved from the precursor; that stretch reads APKDVQLT. 3 disulfide bridges follow: C35–C68, C37–C61, and C51–C69.

The protein belongs to the sea anemone type 3 (BDS) potassium channel toxin family.

Its subcellular location is the secreted. It localises to the nematocyst. Its function is as follows. Potently and selectively inhibits voltage-gated potassium channels Kv11/KCNH/ERG. Acts as a gating-modifier toxin that shifts the voltage-dependence of ERG activation in the positive direction and suppresses its current amplitudes elicited by strong depolarizing pulses that maximally activate the channels. The protein is U-actitoxin-Bgr3a of Bunodosoma granuliferum (Red warty sea anemone).